The sequence spans 316 residues: Probable 5-dehydro-4-deoxyglucarate dehydratase (316 aa).

It belongs to the DapA family.

It catalyses the reaction 5-dehydro-4-deoxy-D-glucarate + H(+) = 2,5-dioxopentanoate + CO2 + H2O. The protein operates within carbohydrate acid metabolism; D-glucarate degradation; 2,5-dioxopentanoate from D-glucarate: step 2/2. In Corynebacterium glutamicum (strain ATCC 13032 / DSM 20300 / JCM 1318 / BCRC 11384 / CCUG 27702 / LMG 3730 / NBRC 12168 / NCIMB 10025 / NRRL B-2784 / 534), this protein is Probable 5-dehydro-4-deoxyglucarate dehydratase.